We begin with the raw amino-acid sequence, 454 residues long: UPF0210 protein Mhun_2657 (454 aa).

Belongs to the UPF0210 family.

This Methanospirillum hungatei JF-1 (strain ATCC 27890 / DSM 864 / NBRC 100397 / JF-1) protein is UPF0210 protein Mhun_2657.